The chain runs to 223 residues: N-(5'-phosphoribosyl)anthranilate isomerase (223 aa).

This sequence belongs to the TrpF family.

The catalysed reaction is N-(5-phospho-beta-D-ribosyl)anthranilate = 1-(2-carboxyphenylamino)-1-deoxy-D-ribulose 5-phosphate. It functions in the pathway amino-acid biosynthesis; L-tryptophan biosynthesis; L-tryptophan from chorismate: step 3/5. The sequence is that of N-(5'-phosphoribosyl)anthranilate isomerase from Bradyrhizobium diazoefficiens (strain JCM 10833 / BCRC 13528 / IAM 13628 / NBRC 14792 / USDA 110).